Consider the following 286-residue polypeptide: D-tagatose-1,6-bisphosphate aldolase subunit KbaY (286 aa).

Aspartate 82 serves as the catalytic Proton donor. Zn(2+)-binding residues include histidine 83 and histidine 180. Glycine 181 serves as a coordination point for dihydroxyacetone phosphate. Position 208 (histidine 208) interacts with Zn(2+). Dihydroxyacetone phosphate is bound by residues 209-211 (GAS) and 230-233 (NVAT).

The protein belongs to the class II fructose-bisphosphate aldolase family. TagBP aldolase KbaY subfamily. As to quaternary structure, homotetramer. Forms a complex with KbaZ. Zn(2+) is required as a cofactor.

It catalyses the reaction D-tagatofuranose 1,6-bisphosphate = D-glyceraldehyde 3-phosphate + dihydroxyacetone phosphate. It functions in the pathway carbohydrate metabolism; D-tagatose 6-phosphate degradation; D-glyceraldehyde 3-phosphate and glycerone phosphate from D-tagatose 6-phosphate: step 2/2. Functionally, catalytic subunit of the tagatose-1,6-bisphosphate aldolase KbaYZ, which catalyzes the reversible aldol condensation of dihydroxyacetone phosphate (DHAP or glycerone-phosphate) with glyceraldehyde 3-phosphate (G3P) to produce tagatose 1,6-bisphosphate (TBP). Requires KbaZ subunit for full activity and stability. Is involved in the catabolism of N-acetylgalactosamine and D-galactosamine. This chain is D-tagatose-1,6-bisphosphate aldolase subunit KbaY (kbaY), found in Escherichia coli.